Reading from the N-terminus, the 119-residue chain is Large ribosomal subunit protein bL20 (119 aa).

Belongs to the bacterial ribosomal protein bL20 family.

In terms of biological role, binds directly to 23S ribosomal RNA and is necessary for the in vitro assembly process of the 50S ribosomal subunit. It is not involved in the protein synthesizing functions of that subunit. In Erythrobacter litoralis (strain HTCC2594), this protein is Large ribosomal subunit protein bL20.